The sequence spans 285 residues: MADPSEHVGLGGPRSPARPEPPPTRFHQVHGANIRMDPSGTRATRVESFAHGVCFSREPLAPGQVFLVEIEEKELGWCGHLRLGLTALDPASLAAVPEFSLPDLVSLGHSWVFAITRHHNRVPREGQPEAEAAVPSGPQALLVEPYLRIEQFRIPRDRLVGRSRPGLYSHLLDQLYEQNVLPPTARRSRLGVLFCPREDGTADMHIIINGEDMGPSARGLPAAQPLYAVVDVFASTKSVRLVQLEYGLPSLQTLCRLVIHKRVVHRLAIDVLHLPKGLKDFCKYE.

The segment at 1–28 (MADPSEHVGLGGPRSPARPEPPPTRFHQ) is disordered. The NHR domain occupies 23-244 (PTRFHQVHGA…STKSVRLVQL (222 aa)). Residues 250–285 (SLQTLCRLVIHKRVVHRLAIDVLHLPKGLKDFCKYE) enclose the SOCS box domain.

As to quaternary structure, probable component the ECS(NEURL2) E3 ubiquitin-protein ligase complex consisting of ELOB/Elongin B, ELOC/Elongin C, CUL5, RBX1 and NEURL2. Interacts with CTNNB1. Expressed specifically in skeletal and cardiac muscles.

It localises to the cytoplasm. It functions in the pathway protein modification; protein ubiquitination. Its function is as follows. Plays an important role in the process of myofiber differentiation and maturation. Probable substrate-recognition component of a SCF-like ECS (Elongin BC-CUL2/5-SOCS-box protein) E3 ubiquitin-protein ligase complex, which mediates the ubiquitination of proteins. Probably contributes to catalysis through recognition and positioning of the substrate and the ubiquitin-conjugating enzyme. During myogenesis, controls the ubiquitination and degradation of the specific pool of CTNNB1/beta-catenin located at the sarcolemma. The protein is Neuralized-like protein 2 (Neurl2) of Mus musculus (Mouse).